We begin with the raw amino-acid sequence, 427 residues long: Serine--tRNA ligase (427 aa).

An L-serine-binding site is contributed by 231–233; it reads TAE. 262 to 264 is a binding site for ATP; sequence RSE. Glutamate 285 is an L-serine binding site. Residue 349 to 352 participates in ATP binding; that stretch reads EISS. Serine 385 contributes to the L-serine binding site.

It belongs to the class-II aminoacyl-tRNA synthetase family. Type-1 seryl-tRNA synthetase subfamily. Homodimer. The tRNA molecule binds across the dimer.

It is found in the cytoplasm. It catalyses the reaction tRNA(Ser) + L-serine + ATP = L-seryl-tRNA(Ser) + AMP + diphosphate + H(+). The catalysed reaction is tRNA(Sec) + L-serine + ATP = L-seryl-tRNA(Sec) + AMP + diphosphate + H(+). The protein operates within aminoacyl-tRNA biosynthesis; selenocysteinyl-tRNA(Sec) biosynthesis; L-seryl-tRNA(Sec) from L-serine and tRNA(Sec): step 1/1. In terms of biological role, catalyzes the attachment of serine to tRNA(Ser). Is also able to aminoacylate tRNA(Sec) with serine, to form the misacylated tRNA L-seryl-tRNA(Sec), which will be further converted into selenocysteinyl-tRNA(Sec). The protein is Serine--tRNA ligase of Hahella chejuensis (strain KCTC 2396).